We begin with the raw amino-acid sequence, 144 residues long: uncharacterized protein (144 aa).

2 N-linked (GlcNAc...) asparagine glycosylation sites follow: Asn14 and Asn15. A helical membrane pass occupies residues 90-110; that stretch reads FSWFIFGLFIACLLLCITLVL. Residues 120–144 are disordered; sequence NKATEVVPSSNIDDEEKQLSLSDMI.

The protein localises to the membrane. This is an uncharacterized protein from Saccharomyces cerevisiae (strain ATCC 204508 / S288c) (Baker's yeast).